The following is a 92-amino-acid chain: Islet amyloid polypeptide (92 aa).

Positions 1-22 are cleaved as a signal peptide; sequence MHISKLPAALLIFSVALNHLKA. Residues 23-34 constitute a propeptide that is removed on maturation; sequence TPVRSGTNHQMD. A disulfide bridge connects residues C38 and C43. Position 73 is a tyrosine amide (Y73). Residues 77 to 92 constitute a propeptide that is removed on maturation; sequence SAAEIPDGDSLDLFLL.

This sequence belongs to the calcitonin family. Can form homodimers. Interacts with IDE and INS. Interaction with INS inhibits homodimerization and fibril formation.

Its subcellular location is the secreted. Amylin/IAPP is a glucoregulatory peptide hormone that plays an important role in the regulation of energy homeostasis. Selectively inhibits insulin-stimulated glucose utilization and glycogen deposition in muscle, while not affecting adipocyte glucose metabolism. IAPP function is mediated by the CALCR-RAMPs (AMYRs) receptor complexes. Amylin can also bind CALCR receptor in the absence of RAMPs, although it is more selective for AMYRs. In Mesocricetus auratus (Golden hamster), this protein is Islet amyloid polypeptide (IAPP).